The following is a 195-amino-acid chain: MIEFVKGPVAYVCAEYITLDVSGVGYKVHVPNPFFYREQDEHVIVFTHHYVREDQQTLYGFRSRRERELFNKLLSVSGIGPKGALAIVASGDIDALIDAIETENEKYLTKFPGVGKKTAKQMALDLKGKLSELAPDYVPNEGLFAQGASELDEACEALVALGYSEREIAKVRKALSGEILTTDAYIKRALQLLLK.

Residues 1-62 (MIEFVKGPVA…EDQQTLYGFR (62 aa)) are domain I. The tract at residues 63-141 (SRRERELFNK…ELAPDYVPNE (79 aa)) is domain II. The flexible linker stretch occupies residues 141-145 (EGLFA). The tract at residues 146–195 (QGASELDEACEALVALGYSEREIAKVRKALSGEILTTDAYIKRALQLLLK) is domain III.

Belongs to the RuvA family. In terms of assembly, homotetramer. Forms an RuvA(8)-RuvB(12)-Holliday junction (HJ) complex. HJ DNA is sandwiched between 2 RuvA tetramers; dsDNA enters through RuvA and exits via RuvB. An RuvB hexamer assembles on each DNA strand where it exits the tetramer. Each RuvB hexamer is contacted by two RuvA subunits (via domain III) on 2 adjacent RuvB subunits; this complex drives branch migration. In the full resolvosome a probable DNA-RuvA(4)-RuvB(12)-RuvC(2) complex forms which resolves the HJ.

The protein localises to the cytoplasm. Functionally, the RuvA-RuvB-RuvC complex processes Holliday junction (HJ) DNA during genetic recombination and DNA repair, while the RuvA-RuvB complex plays an important role in the rescue of blocked DNA replication forks via replication fork reversal (RFR). RuvA specifically binds to HJ cruciform DNA, conferring on it an open structure. The RuvB hexamer acts as an ATP-dependent pump, pulling dsDNA into and through the RuvAB complex. HJ branch migration allows RuvC to scan DNA until it finds its consensus sequence, where it cleaves and resolves the cruciform DNA. The chain is Holliday junction branch migration complex subunit RuvA from Exiguobacterium sp. (strain ATCC BAA-1283 / AT1b).